The chain runs to 165 residues: Transcription elongation factor A protein-like 1 (165 aa).

Disordered stretches follow at residues 1-66 (MENS…LLPE) and 89-124 (IPME…GDIH). The segment covering 33 to 60 (CSEDDQSSEDLSSEEQSSDEEFFPEELL) has biased composition (acidic residues). Residues 101–124 (HKLEEGSFKERLARSRPQFRGDIH) show a composition bias toward basic and acidic residues.

Belongs to the TFS-II family. TFA subfamily.

Its subcellular location is the nucleus. May be involved in transcriptional regulation. Modulates various viral and cellular promoters in a promoter context-dependent manner. Does not bind DNA directly. This is Transcription elongation factor A protein-like 1 from Rattus norvegicus (Rat).